A 218-amino-acid chain; its full sequence is Small ribosomal subunit protein uS3 (218 aa).

In terms of domain architecture, KH type-2 spans 38-106; sequence IRTFLKKKLY…KLVVDIKEVK (69 aa).

The protein belongs to the universal ribosomal protein uS3 family. As to quaternary structure, part of the 30S ribosomal subunit. Forms a tight complex with proteins S10 and S14.

Its function is as follows. Binds the lower part of the 30S subunit head. Binds mRNA in the 70S ribosome, positioning it for translation. The polypeptide is Small ribosomal subunit protein uS3 (Agathobacter rectalis (strain ATCC 33656 / DSM 3377 / JCM 17463 / KCTC 5835 / VPI 0990) (Eubacterium rectale)).